Consider the following 146-residue polypeptide: Hemoglobin subunit beta (146 aa).

Val1 carries the post-translational modification N-acetylvaline. The 145-residue stretch at 2–146 (HLTADEKAAV…VATALAHKYH (145 aa)) folds into the Globin domain. Position 12 is a phosphothreonine (Thr12). Residue Ser44 is modified to Phosphoserine. Lys59 carries the N6-acetyllysine modification. Heme b is bound at residue His63. Lys82 is modified (N6-acetyllysine). His92 contributes to the heme b binding site. Position 93 is an S-nitrosocysteine (Cys93). Residue Lys144 is modified to N6-acetyllysine.

Belongs to the globin family. In terms of assembly, heterotetramer of two alpha chains and two beta chains. As to expression, red blood cells.

Functionally, involved in oxygen transport from the lung to the various peripheral tissues. The polypeptide is Hemoglobin subunit beta (HBB) (Cephalopachus bancanus (Western tarsier)).